Here is a 291-residue protein sequence, read N- to C-terminus: 4-diphosphocytidyl-2-C-methyl-D-erythritol kinase (291 aa).

The active site involves K8. ATP is bound at residue 89 to 99 (PIGAGVGGGSS). The active site involves D131.

Belongs to the GHMP kinase family. IspE subfamily.

It carries out the reaction 4-CDP-2-C-methyl-D-erythritol + ATP = 4-CDP-2-C-methyl-D-erythritol 2-phosphate + ADP + H(+). Its pathway is isoprenoid biosynthesis; isopentenyl diphosphate biosynthesis via DXP pathway; isopentenyl diphosphate from 1-deoxy-D-xylulose 5-phosphate: step 3/6. In terms of biological role, catalyzes the phosphorylation of the position 2 hydroxy group of 4-diphosphocytidyl-2C-methyl-D-erythritol. In Chlamydia caviae (strain ATCC VR-813 / DSM 19441 / 03DC25 / GPIC) (Chlamydophila caviae), this protein is 4-diphosphocytidyl-2-C-methyl-D-erythritol kinase.